A 257-amino-acid chain; its full sequence is Imidazole glycerol phosphate synthase subunit HisF (257 aa).

Residues aspartate 12 and aspartate 131 contribute to the active site.

It belongs to the HisA/HisF family. Heterodimer of HisH and HisF.

The protein localises to the cytoplasm. The catalysed reaction is 5-[(5-phospho-1-deoxy-D-ribulos-1-ylimino)methylamino]-1-(5-phospho-beta-D-ribosyl)imidazole-4-carboxamide + L-glutamine = D-erythro-1-(imidazol-4-yl)glycerol 3-phosphate + 5-amino-1-(5-phospho-beta-D-ribosyl)imidazole-4-carboxamide + L-glutamate + H(+). It participates in amino-acid biosynthesis; L-histidine biosynthesis; L-histidine from 5-phospho-alpha-D-ribose 1-diphosphate: step 5/9. Functionally, IGPS catalyzes the conversion of PRFAR and glutamine to IGP, AICAR and glutamate. The HisF subunit catalyzes the cyclization activity that produces IGP and AICAR from PRFAR using the ammonia provided by the HisH subunit. This Paraburkholderia phytofirmans (strain DSM 17436 / LMG 22146 / PsJN) (Burkholderia phytofirmans) protein is Imidazole glycerol phosphate synthase subunit HisF.